The following is an 854-amino-acid chain: DNA mismatch repair protein MutS (854 aa).

ATP is bound at residue 614–621; the sequence is GPNMGGKS.

It belongs to the DNA mismatch repair MutS family.

Its function is as follows. This protein is involved in the repair of mismatches in DNA. It is possible that it carries out the mismatch recognition step. This protein has a weak ATPase activity. This is DNA mismatch repair protein MutS from Sodalis glossinidius (strain morsitans).